Consider the following 369-residue polypeptide: Tryptophan 2,3-dioxygenase 2 (369 aa).

Substrate contacts are provided by residues 36–40 (FIVVH) and Arg-107. Residue His-303 coordinates heme. Thr-317 contacts substrate.

This sequence belongs to the tryptophan 2,3-dioxygenase family. In terms of assembly, homotetramer. Requires heme as cofactor.

The catalysed reaction is L-tryptophan + O2 = N-formyl-L-kynurenine. It functions in the pathway amino-acid degradation; L-tryptophan degradation via kynurenine pathway; L-kynurenine from L-tryptophan: step 1/2. In terms of biological role, heme-dependent dioxygenase that catalyzes the oxidative cleavage of the L-tryptophan (L-Trp) pyrrole ring and converts L-tryptophan to N-formyl-L-kynurenine. Catalyzes the oxidative cleavage of the indole moiety. The chain is Tryptophan 2,3-dioxygenase 2 from Ralstonia nicotianae (strain ATCC BAA-1114 / GMI1000) (Ralstonia solanacearum).